The chain runs to 752 residues: Protein GCN20 (752 aa).

At alanine 2 the chain carries N-acetylalanine. ABC transporter domains follow at residues 199–464 (IHID…RKNA) and 532–748 (IQLQ…AAGV). ATP is bound by residues 232-239 (GQNGIGKS) and 565-572 (GANGCGKT).

This sequence belongs to the ABC transporter superfamily. ABCF family. EF3 subfamily. Interacts (via N-terminus) with GCN1 (via C-terminus); this interaction stimulates GCN2 kinase activity in response to amino acid starvation. The GCN1-GCN20 complex interacts with GCN2 on translating ribosomes in amino acid-starved cells; this association stimulates GCN2 kinase activation by uncharged tRNAs, and hence allowing GCN4 translational activation and derepression of amino acid biosynthetic genes. Associates with ribosomes.

Functionally, acts as a positive activator of the GCN2 protein kinase activity in response to in response to low amino acid, carbon, or purine availability. Component of the GCN1-GCN20 complex that forms a complex with GCN2 on translating ribosomes; during this process, GCN20 helps GCN1 to act as a chaperone to facilitate delivery of uncharged tRNAs that enter the A site of ribosomes to the tRNA-binding domain of GCN2, and hence stimulating GCN2 kinase activity. Participates in gene-specific mRNA translation activation, such as the transcriptional activator GCN4, by promoting the GCN2-mediated phosphorylation of eukaryotic translation initiation factor 2 (eIF-2-alpha/SUI2) on 'Ser-52', and hence allowing GCN4-mediated reprogramming of amino acid biosynthetic gene expression to alleviate nutrient depletion. This chain is Protein GCN20, found in Saccharomyces cerevisiae (strain ATCC 204508 / S288c) (Baker's yeast).